A 175-amino-acid polypeptide reads, in one-letter code: Apoptosis regulator Bcl-2 homolog (175 aa).

The chain crosses the membrane as a helical span at residues 152–174 (YYVTRYFRVAAFIITSLAVINLF).

Interacts with host BAK1 and BAX as well as other BH3-containing proteins including BIM, BID or PUMA.

It localises to the host membrane. In terms of biological role, plays a role in the inhibition of host apoptosis. Interacts with host proapoptotic factors BAK1 and BAX to supposedly prevent their activation. The chain is Apoptosis regulator Bcl-2 homolog (CNPV058) from Canarypox virus (CNPV).